Consider the following 56-residue polypeptide: uncharacterized protein (56 aa).

4Fe-4S ferredoxin-type domains are found at residues 2-28 (VKID…NLIE) and 29-56 (HIIV…LEGE). The [4Fe-4S] cluster site is built by Cys9, Cys12, Cys15, Cys19, Cys38, Cys41, Cys44, and Cys48.

[4Fe-4S] cluster serves as cofactor.

Its function is as follows. Ferredoxins are iron-sulfur proteins that transfer electrons in a wide variety of metabolic reactions. This is an uncharacterized protein from Methanocaldococcus jannaschii (strain ATCC 43067 / DSM 2661 / JAL-1 / JCM 10045 / NBRC 100440) (Methanococcus jannaschii).